The primary structure comprises 115 residues: Putative UPF0377 protein YHL045W (115 aa).

The chain crosses the membrane as a helical span at residues 10-30 (ACIFIDSVCEGIVFWGLCLFV).

It belongs to the UPF0377 family.

Its subcellular location is the membrane. This chain is Putative UPF0377 protein YHL045W, found in Saccharomyces cerevisiae (strain ATCC 204508 / S288c) (Baker's yeast).